The primary structure comprises 414 residues: Probable protein phosphatase 2C 80 (414 aa).

One can recognise a PPM-type phosphatase domain in the interval 174 to 411 (SCYLPHPEKE…DDITAVVSYV (238 aa)). Aspartate 204, glycine 205, aspartate 336, and aspartate 402 together coordinate Mn(2+).

It belongs to the PP2C family. Mg(2+) serves as cofactor. Requires Mn(2+) as cofactor.

The catalysed reaction is O-phospho-L-seryl-[protein] + H2O = L-seryl-[protein] + phosphate. It catalyses the reaction O-phospho-L-threonyl-[protein] + H2O = L-threonyl-[protein] + phosphate. The sequence is that of Probable protein phosphatase 2C 80 from Arabidopsis thaliana (Mouse-ear cress).